Reading from the N-terminus, the 220-residue chain is Deoxyribose-phosphate aldolase (220 aa).

The active-site Proton donor/acceptor is the Asp-89. Lys-151 serves as the catalytic Schiff-base intermediate with acetaldehyde. The active-site Proton donor/acceptor is Lys-180.

Belongs to the DeoC/FbaB aldolase family. DeoC type 1 subfamily.

It is found in the cytoplasm. The catalysed reaction is 2-deoxy-D-ribose 5-phosphate = D-glyceraldehyde 3-phosphate + acetaldehyde. It participates in carbohydrate degradation; 2-deoxy-D-ribose 1-phosphate degradation; D-glyceraldehyde 3-phosphate and acetaldehyde from 2-deoxy-alpha-D-ribose 1-phosphate: step 2/2. Functionally, catalyzes a reversible aldol reaction between acetaldehyde and D-glyceraldehyde 3-phosphate to generate 2-deoxy-D-ribose 5-phosphate. This chain is Deoxyribose-phosphate aldolase, found in Staphylococcus haemolyticus (strain JCSC1435).